The following is a 364-amino-acid chain: UDP-N-acetylglucosamine--N-acetylmuramyl-(pentapeptide) pyrophosphoryl-undecaprenol N-acetylglucosamine transferase (364 aa).

Residues 10–12, asparagine 124, serine 195, and glutamine 295 each bind UDP-N-acetyl-alpha-D-glucosamine; that span reads TGG.

Belongs to the glycosyltransferase 28 family. MurG subfamily.

It is found in the cell membrane. The enzyme catalyses di-trans,octa-cis-undecaprenyl diphospho-N-acetyl-alpha-D-muramoyl-L-alanyl-D-glutamyl-meso-2,6-diaminopimeloyl-D-alanyl-D-alanine + UDP-N-acetyl-alpha-D-glucosamine = di-trans,octa-cis-undecaprenyl diphospho-[N-acetyl-alpha-D-glucosaminyl-(1-&gt;4)]-N-acetyl-alpha-D-muramoyl-L-alanyl-D-glutamyl-meso-2,6-diaminopimeloyl-D-alanyl-D-alanine + UDP + H(+). It functions in the pathway cell wall biogenesis; peptidoglycan biosynthesis. In terms of biological role, cell wall formation. Catalyzes the transfer of a GlcNAc subunit on undecaprenyl-pyrophosphoryl-MurNAc-pentapeptide (lipid intermediate I) to form undecaprenyl-pyrophosphoryl-MurNAc-(pentapeptide)GlcNAc (lipid intermediate II). The polypeptide is UDP-N-acetylglucosamine--N-acetylmuramyl-(pentapeptide) pyrophosphoryl-undecaprenol N-acetylglucosamine transferase (Bacillus pumilus (strain SAFR-032)).